The primary structure comprises 1007 residues: Glucose transport transcription regulator RGT1 (1007 aa).

The segment covering 1 to 11 (MLSALIQNGMS) has biased composition (polar residues). A disordered region spans residues 1–115 (MLSALIQNGM…ESRRRSKVSR (115 aa)). Residues 21–33 (NNTTNGSSSTTDN) are compositionally biased toward low complexity. 3 stretches are compositionally biased toward polar residues: residues 42–65 (NTEN…SKQD), 74–83 (TPRSINTGAS), and 96–105 (VSSNVSTATT). Residues 117–151 (CDQCRKKKIKCDFIEGHDINPDQSCTGCRKIGEKC) constitute a DNA-binding region (zn(2)-C6 fungal-type). 4 disordered regions span residues 155-224 (RIPL…ATST), 267-350 (QRRP…SAIP), 399-423 (LQQQ…SNGG), and 462-496 (AEVE…QNLP). Composition is skewed to polar residues over residues 196-206 (SVSNPVNAVNE) and 274-288 (SLAS…GKTN). Residues 289-303 (QQQPLPSQSQPQSLQ) are compositionally biased toward low complexity. Polar residues-rich tracts occupy residues 304 to 323 (NIGN…TFRN), 329 to 339 (QPSQDSVSEAG), and 404 to 419 (SLHS…STGI). Basic residues predominate over residues 473-489 (QKKRKRSNRSSTSKKGK).

The protein belongs to the EDS1/RGT1 family.

The protein resides in the nucleus. The protein localises to the cytoplasm. Its function is as follows. Glucose-responsive transcription factor that regulates expression of several glucose transporter (HXT) genes in response to glucose. In the absence of glucose, it functions as a transcriptional repressor, whereas high concentrations of glucose cause it to function as a transcriptional activator. In cells growing on low levels of glucose, has a neutral role, neither repressing nor activating transcription. The sequence is that of Glucose transport transcription regulator RGT1 (RGT1) from Kluyveromyces lactis (strain ATCC 8585 / CBS 2359 / DSM 70799 / NBRC 1267 / NRRL Y-1140 / WM37) (Yeast).